Reading from the N-terminus, the 123-residue chain is Ribonuclease P protein component (123 aa).

It belongs to the RnpA family. As to quaternary structure, consists of a catalytic RNA component (M1 or rnpB) and a protein subunit.

It carries out the reaction Endonucleolytic cleavage of RNA, removing 5'-extranucleotides from tRNA precursor.. Its function is as follows. RNaseP catalyzes the removal of the 5'-leader sequence from pre-tRNA to produce the mature 5'-terminus. It can also cleave other RNA substrates such as 4.5S RNA. The protein component plays an auxiliary but essential role in vivo by binding to the 5'-leader sequence and broadening the substrate specificity of the ribozyme. This chain is Ribonuclease P protein component, found in Streptomyces bikiniensis.